Reading from the N-terminus, the 268-residue chain is Fc receptor-like protein 6 (268 aa).

An N-terminal signal peptide occupies residues 1-16; that stretch reads MLLWMVLLLCESMAEA. Topologically, residues 17 to 215 are extracellular; sequence QELFPNPELT…TAWIKSNMLP (199 aa). Residues 114-194 enclose the Ig-like C2-type domain; the sequence is PVLTLQHEAT…AKNNISREIS (81 aa). Residues Cys135 and Cys183 are joined by a disulfide bond. Residues Asn180 and Asn188 are each glycosylated (N-linked (GlcNAc...) asparagine). The chain crosses the membrane as a helical span at residues 216–236; that stretch reads IWLPASLLGGMVIAAVVLMYF. Residues 237 to 268 lie on the Cytoplasmic side of the membrane; it reads FKPCKKHARPETPTLKEPDSFLYVSVDNQRYK.

In terms of assembly, interacts with class II MHC.

Its subcellular location is the cell membrane. Its function is as follows. Acts as a MHC class II receptor. When stimulated on its own, does not play a role in cytokine production or the release of cytotoxic granules by NK cells and cytotoxic CD8(+) T cells. Does not act as an Fc receptor. This chain is Fc receptor-like protein 6 (Fcrl6), found in Mus musculus (Mouse).